The following is a 29-amino-acid chain: Glucagon (29 aa).

This sequence belongs to the glucagon family.

Its subcellular location is the secreted. Glucagon plays a key role in glucose metabolism and homeostasis. Regulates blood glucose by increasing gluconeogenesis and decreasing glycolysis. In Struthio camelus (Common ostrich), this protein is Glucagon (GCG).